We begin with the raw amino-acid sequence, 312 residues long: Aspartate carbamoyltransferase catalytic subunit (312 aa).

Carbamoyl phosphate contacts are provided by arginine 58 and threonine 59. Lysine 86 contacts L-aspartate. The carbamoyl phosphate site is built by arginine 108, histidine 136, and glutamine 139. L-aspartate-binding residues include arginine 169 and arginine 223. Glycine 264 and proline 265 together coordinate carbamoyl phosphate.

This sequence belongs to the aspartate/ornithine carbamoyltransferase superfamily. ATCase family. In terms of assembly, heterododecamer (2C3:3R2) of six catalytic PyrB chains organized as two trimers (C3), and six regulatory PyrI chains organized as three dimers (R2).

The catalysed reaction is carbamoyl phosphate + L-aspartate = N-carbamoyl-L-aspartate + phosphate + H(+). It functions in the pathway pyrimidine metabolism; UMP biosynthesis via de novo pathway; (S)-dihydroorotate from bicarbonate: step 2/3. Functionally, catalyzes the condensation of carbamoyl phosphate and aspartate to form carbamoyl aspartate and inorganic phosphate, the committed step in the de novo pyrimidine nucleotide biosynthesis pathway. In Endomicrobium trichonymphae, this protein is Aspartate carbamoyltransferase catalytic subunit.